The chain runs to 259 residues: Small ribosomal subunit protein uS2 (259 aa).

The protein belongs to the universal ribosomal protein uS2 family.

In Streptococcus pneumoniae (strain 70585), this protein is Small ribosomal subunit protein uS2.